The primary structure comprises 385 residues: 26S proteasome non-ATPase regulatory subunit 13 (385 aa).

In terms of domain architecture, PCI spans 176–347; the sequence is EFYKNALMYL…EIIHITWVTP (172 aa).

Belongs to the proteasome subunit S11 family.

Its function is as follows. Acts as a regulatory subunit of the 26S proteasome which is involved in the ATP-dependent degradation of ubiquitinated proteins. This is 26S proteasome non-ATPase regulatory subunit 13 (psmD13) from Dictyostelium discoideum (Social amoeba).